The sequence spans 117 residues: Protein OPG035 (117 aa).

Belongs to the poxviridae OPG035 family.

Functionally, bcl-2-like protein which contributes to virulence by preventing host NF-kappa-B activation in response to pro-inflammatory stimuli such as TNF-alpha or IL1B. This Bos taurus (Bovine) protein is Protein OPG035 (OPG035).